A 412-amino-acid polypeptide reads, in one-letter code: Serine hydroxymethyltransferase (412 aa).

(6S)-5,6,7,8-tetrahydrofolate-binding positions include Leu-117 and 121–123 (GHL). Lys-226 carries the N6-(pyridoxal phosphate)lysine modification. 349-351 (SPF) is a (6S)-5,6,7,8-tetrahydrofolate binding site.

It belongs to the SHMT family. Homodimer. Pyridoxal 5'-phosphate serves as cofactor.

It is found in the cytoplasm. The enzyme catalyses (6R)-5,10-methylene-5,6,7,8-tetrahydrofolate + glycine + H2O = (6S)-5,6,7,8-tetrahydrofolate + L-serine. Its pathway is one-carbon metabolism; tetrahydrofolate interconversion. The protein operates within amino-acid biosynthesis; glycine biosynthesis; glycine from L-serine: step 1/1. Its function is as follows. Catalyzes the reversible interconversion of serine and glycine with tetrahydrofolate (THF) serving as the one-carbon carrier. This reaction serves as the major source of one-carbon groups required for the biosynthesis of purines, thymidylate, methionine, and other important biomolecules. Also exhibits THF-independent aldolase activity toward beta-hydroxyamino acids, producing glycine and aldehydes, via a retro-aldol mechanism. This Geobacillus kaustophilus (strain HTA426) protein is Serine hydroxymethyltransferase.